The following is a 244-amino-acid chain: tRNA (guanine-N(7)-)-methyltransferase (244 aa).

4 residues coordinate S-adenosyl-L-methionine: glutamate 75, glutamate 100, aspartate 127, and aspartate 150. Aspartate 150 is an active-site residue. Substrate-binding positions include lysine 154, aspartate 186, and 223–226; that span reads TRFE.

Belongs to the class I-like SAM-binding methyltransferase superfamily. TrmB family.

The enzyme catalyses guanosine(46) in tRNA + S-adenosyl-L-methionine = N(7)-methylguanosine(46) in tRNA + S-adenosyl-L-homocysteine. It functions in the pathway tRNA modification; N(7)-methylguanine-tRNA biosynthesis. Its function is as follows. Catalyzes the formation of N(7)-methylguanine at position 46 (m7G46) in tRNA. The protein is tRNA (guanine-N(7)-)-methyltransferase of Xylella fastidiosa (strain M12).